A 240-amino-acid chain; its full sequence is Triosephosphate isomerase (240 aa).

8–10 (NWK) contributes to the substrate binding site. His93 functions as the Electrophile in the catalytic mechanism. Glu160 functions as the Proton acceptor in the catalytic mechanism. Substrate is bound at residue Gly166.

Belongs to the triosephosphate isomerase family. In terms of assembly, homodimer.

Its subcellular location is the cytoplasm. It catalyses the reaction D-glyceraldehyde 3-phosphate = dihydroxyacetone phosphate. It functions in the pathway carbohydrate biosynthesis; gluconeogenesis. Its pathway is carbohydrate degradation; glycolysis; D-glyceraldehyde 3-phosphate from glycerone phosphate: step 1/1. Functionally, involved in the gluconeogenesis. Catalyzes stereospecifically the conversion of dihydroxyacetone phosphate (DHAP) to D-glyceraldehyde-3-phosphate (G3P). The protein is Triosephosphate isomerase of Ehrlichia chaffeensis (strain ATCC CRL-10679 / Arkansas).